The chain runs to 155 residues: Small ribosomal subunit protein uS7c (155 aa).

This sequence belongs to the universal ribosomal protein uS7 family. In terms of assembly, part of the 30S ribosomal subunit.

It localises to the plastid. It is found in the chloroplast. Functionally, one of the primary rRNA binding proteins, it binds directly to 16S rRNA where it nucleates assembly of the head domain of the 30S subunit. The chain is Small ribosomal subunit protein uS7c (rps7) from Metasequoia glyptostroboides (Dawn redwood).